The primary structure comprises 393 residues: uncharacterized protein (393 aa).

Residues 164–183 form a disordered region; sequence ASDPHPGKNSPASPTGENKE. Residues 173–183 show a composition bias toward polar residues; sequence SPASPTGENKE.

This is an uncharacterized protein from Treponema pallidum (strain Nichols).